A 341-amino-acid chain; its full sequence is MSFPYSLKSFNTFGVTQSCLSLIEVRSKAELQAICLPLYQSKQPMLVLGGGSNIVFTDDFNGTVVRVLSKGISVTEDVSYFYLEIEAGENWHELVEFTLNNHMAGLENLALIPGTVGAAPIQNIGAYGVELCDICHWVEYLDLDSGLLLRLSVDECEFSYRESIFKGRLRDKAVITAVGLRLPKTWQPRLAYGPLQSFAADTVTPRDIFERVCEVRSEKLPDPHILGNAGSFFKNPIISAAAYVELAQRFPNIVGYAQANGDVKLAAGWLIEHAGLKGFVLGNAGVHAKQALVLVNLGNATGQDICRLALHVIARVHDVFGVMLEAEPRIMGLNGETSLHV.

In terms of domain architecture, FAD-binding PCMH-type spans Val-15–Thr-185. Residue Arg-161 is part of the active site. Ser-231 functions as the Proton donor in the catalytic mechanism. Residue Glu-327 is part of the active site.

Belongs to the MurB family. FAD serves as cofactor.

It localises to the cytoplasm. It carries out the reaction UDP-N-acetyl-alpha-D-muramate + NADP(+) = UDP-N-acetyl-3-O-(1-carboxyvinyl)-alpha-D-glucosamine + NADPH + H(+). Its pathway is cell wall biogenesis; peptidoglycan biosynthesis. In terms of biological role, cell wall formation. This is UDP-N-acetylenolpyruvoylglucosamine reductase from Shewanella oneidensis (strain ATCC 700550 / JCM 31522 / CIP 106686 / LMG 19005 / NCIMB 14063 / MR-1).